Here is a 247-residue protein sequence, read N- to C-terminus: Probable transcriptional regulatory protein Gbem_3313 (247 aa).

This sequence belongs to the TACO1 family.

It is found in the cytoplasm. This is Probable transcriptional regulatory protein Gbem_3313 from Citrifermentans bemidjiense (strain ATCC BAA-1014 / DSM 16622 / JCM 12645 / Bem) (Geobacter bemidjiensis).